Here is a 425-residue protein sequence, read N- to C-terminus: GPI mannosyltransferase 1 (425 aa).

9 helical membrane-spanning segments follow: residues 11–31 (VIGA…WQDA), 85–105 (FFAF…WLIA), 144–164 (LLGV…VSLA), 166–186 (VILG…PAVV), 233–253 (IHLT…MYIL), 295–315 (FESL…PLVL), 340–360 (SQYF…SSLM), 367–387 (ILVG…GYNL), and 398–418 (GLFL…GIIV).

The protein belongs to the PIGM family.

The protein resides in the endoplasmic reticulum membrane. It participates in glycolipid biosynthesis; glycosylphosphatidylinositol-anchor biosynthesis. Functionally, mannosyltransferase involved in glycosylphosphatidylinositol-anchor biosynthesis. Transfers the first alpha-1,4-mannose to GlcN-acyl-PI during GPI precursor assembly. Required for cell wall integrity. The sequence is that of GPI mannosyltransferase 1 (gpi14) from Aspergillus fumigatus (strain ATCC MYA-4609 / CBS 101355 / FGSC A1100 / Af293) (Neosartorya fumigata).